A 38-amino-acid polypeptide reads, in one-letter code: Photosystem II reaction center protein L (38 aa).

A helical transmembrane segment spans residues 17 to 37 (SLYWGLLLIFVLAVLFSSYIF).

Belongs to the PsbL family. In terms of assembly, PSII is composed of 1 copy each of membrane proteins PsbA, PsbB, PsbC, PsbD, PsbE, PsbF, PsbH, PsbI, PsbJ, PsbK, PsbL, PsbM, PsbT, PsbX, PsbY, PsbZ, Psb30/Ycf12, at least 3 peripheral proteins of the oxygen-evolving complex and a large number of cofactors. It forms dimeric complexes.

Its subcellular location is the plastid. It localises to the chloroplast thylakoid membrane. One of the components of the core complex of photosystem II (PSII). PSII is a light-driven water:plastoquinone oxidoreductase that uses light energy to abstract electrons from H(2)O, generating O(2) and a proton gradient subsequently used for ATP formation. It consists of a core antenna complex that captures photons, and an electron transfer chain that converts photonic excitation into a charge separation. This subunit is found at the monomer-monomer interface and is required for correct PSII assembly and/or dimerization. The protein is Photosystem II reaction center protein L of Tupiella akineta (Green alga).